The sequence spans 160 residues: Cytochrome b6-f complex subunit 4 (160 aa).

3 consecutive transmembrane segments (helical) span residues 36–56 (LLYI…GLAV), 95–115 (LLGV…PFLE), and 131–151 (TIFL…ALPI).

This sequence belongs to the cytochrome b family. PetD subfamily. As to quaternary structure, the 4 large subunits of the cytochrome b6-f complex are cytochrome b6, subunit IV (17 kDa polypeptide, petD), cytochrome f and the Rieske protein, while the 4 small subunits are petG, petL, petM and petN. The complex functions as a dimer.

Its subcellular location is the plastid. The protein resides in the chloroplast thylakoid membrane. Component of the cytochrome b6-f complex, which mediates electron transfer between photosystem II (PSII) and photosystem I (PSI), cyclic electron flow around PSI, and state transitions. This Anthoceros angustus (Hornwort) protein is Cytochrome b6-f complex subunit 4.